The primary structure comprises 54 residues: Large ribosomal subunit protein bL33 (54 aa).

The protein belongs to the bacterial ribosomal protein bL33 family.

The protein is Large ribosomal subunit protein bL33 of Corynebacterium efficiens (strain DSM 44549 / YS-314 / AJ 12310 / JCM 11189 / NBRC 100395).